The following is a 144-amino-acid chain: RxLR effector protein PITG_03192 (144 aa).

The N-terminal stretch at 1 to 24 (MRVGFVFALLVVSVIVCFNGLTSA) is a signal peptide. A RxLR-dEER motif is present at residues 49-58 (RNLRASGEER). The N-linked (GlcNAc...) asparagine glycan is linked to N115. The helical transmembrane segment at 122–142 (FFILATLVMFPIGVWAVVTNY) threads the bilayer.

Belongs to the RxLR effector family. Interacts with the C-terminal portions the ER-associated potato NAC transcription factors NTP1 and NTP2.

The protein localises to the secreted. It localises to the host endoplasmic reticulum membrane. Functionally, effector that is required for full virulence. Targets host NTP1 and NTP2 transcription factors and prevents their pathogen-associated molecular pattern (PAMP)-triggered re-localization from the endoplasmic reticulum into the nucleus, where they contribute to prevent disease progression by P.infestans. This Phytophthora infestans (strain T30-4) (Potato late blight agent) protein is RxLR effector protein PITG_03192.